The sequence spans 404 residues: MATLILSFLLLLLATKLPESLAGHCTTTTATKSFEKCISLPTQQASIAWTYHPHNATLDLCFFGTFISPSGWVGWGINPDSPAQMTGSRVLIAFPDPNSGQLILLPYVLDSSVKLQKGPLLSRPLDLVRLSSSSASLYGGKMATIRNGASVQIYASVKLSSNNTKIHHVWNRGLYVQGYSPTIHPTTSTDLSSFSTFDVTSGFATVNQNSGSRALKVTHGVVNAISWGFLLPAGAVTARYLRQMQSIGPTWFYIHAAIQLTGFLLGTIGFSIGIVLGHNSPGVTYGLHRSLGIATFTAAALQTLALLFRPKTTNKFRRYWKSYHHFVGYACVVMGVVNVFQGFEVLREGRSYAKLGYCLCLSTLVGVCVAMEVNSWVVFCRKAKEEKMKRDGLTGVDRCSGSHS.

An N-terminal signal peptide occupies residues 1 to 22; the sequence is MATLILSFLLLLLATKLPESLA. The region spanning 43 to 173 is the DOMON domain; the sequence is QQASIAWTYH…TKIHHVWNRG (131 aa). One can recognise a Cytochrome b561 domain in the interval 180–380; sequence SPTIHPTTST…MEVNSWVVFC (201 aa). The helical transmembrane segment at 217 to 237 threads the bilayer; that stretch reads VTHGVVNAISWGFLLPAGAVT. Positions 219 and 255 each coordinate heme b. A helical membrane pass occupies residues 256 to 276; sequence AAIQLTGFLLGTIGFSIGIVL. His-288 is a heme b binding site. A helical membrane pass occupies residues 290–310; sequence SLGIATFTAAALQTLALLFRP. Heme b is bound at residue His-324. Helical transmembrane passes span 326–346 and 359–379; these read FVGY…FEVL and LCLS…WVVF.

It depends on heme b as a cofactor.

It localises to the membrane. Functionally, may act as a catecholamine-responsive trans-membrane electron transporter. In Arabidopsis thaliana (Mouse-ear cress), this protein is Cytochrome b561 and DOMON domain-containing protein At2g04850.